Consider the following 116-residue polypeptide: Endocuticle structural glycoprotein ABD-4 (116 aa).

A Pyrrolidone carboxylic acid modification is found at Gln1. Positions 20-92 (DGSYQWNYET…PQGAHFPTPP (73 aa)) constitute a Chitin-binding type R&amp;R domain. Residues 78–97 (ENGFVPQGAHFPTPPPIPPA) are disordered. The O-linked (GalNAc) threonine; in ADB-4A, ABD-4B and ABD-4C glycan is linked to Thr90. O-linked (GalNAc) threonine; in ADB-4A and ABD-4B glycosylation is present at Thr107. An O-linked (GalNAc) threonine; in ADB-4A glycan is attached at Thr111. At Pro116 the chain carries Proline amide.

In terms of processing, 3 variants exists that arise from a sequential glycosylation with N-acetylgalactosamine at three (ABD-4A), two (ABD-4B) or one (ABD-4C) threonine residues.

Component of the soft endocuticle of migratory locust. The polypeptide is Endocuticle structural glycoprotein ABD-4 (Locusta migratoria (Migratory locust)).